Consider the following 406-residue polypeptide: 3-oxoacyl-[acyl-carrier-protein] synthase 1 (406 aa).

The Ketosynthase family 3 (KS3) domain occupies Met1–Arg403. Residues Cys162, His297, and His332 each act as for beta-ketoacyl synthase activity in the active site.

Belongs to the thiolase-like superfamily. Beta-ketoacyl-ACP synthases family. Homodimer.

The protein resides in the cytoplasm. It catalyses the reaction a fatty acyl-[ACP] + malonyl-[ACP] + H(+) = a 3-oxoacyl-[ACP] + holo-[ACP] + CO2. It carries out the reaction (3Z)-decenoyl-[ACP] + malonyl-[ACP] + H(+) = 3-oxo-(5Z)-dodecenoyl-[ACP] + holo-[ACP] + CO2. It functions in the pathway lipid metabolism; fatty acid biosynthesis. Involved in the type II fatty acid elongation cycle. Catalyzes the elongation of a wide range of acyl-ACP by the addition of two carbons from malonyl-ACP to an acyl acceptor. Can also use unsaturated fatty acids. Catalyzes a key reaction in unsaturated fatty acid (UFA) synthesis, the elongation of the cis-3-decenoyl-ACP produced by FabA. This is 3-oxoacyl-[acyl-carrier-protein] synthase 1 (fabB) from Haemophilus influenzae (strain ATCC 51907 / DSM 11121 / KW20 / Rd).